We begin with the raw amino-acid sequence, 310 residues long: uncharacterized protein (310 aa).

The disordered stretch occupies residues 1–70 (MAGNSQRRGA…ARGRTDETET (70 aa)). The segment covering 49–62 (AAKRAKAQQRRPAR) has biased composition (basic residues). Glycine 262, valine 282, and leucine 291 together coordinate S-adenosyl-L-methionine.

This sequence belongs to the class IV-like SAM-binding methyltransferase superfamily. RNA methyltransferase TrmH family.

This is an uncharacterized protein from Mycobacterium ulcerans (strain Agy99).